Here is a 697-residue protein sequence, read N- to C-terminus: Pentatricopeptide repeat-containing protein At2g13600 (697 aa).

16 PPR repeats span residues 18–53 (DSSPFAKLLDSCIKSKLSAIYVRYVHASVIKSGFSN), 54–84 (EIFIQNRLIDAYSKCGSLEDGRQVFDKMPQR), 85–115 (NIYTWNSVVTGLTKLGFLDEADSLFRSMPER), 116–150 (DQCTWNSMVSGFAQHDRCEEALCYFAMMHKEGFVL), 151–185 (NEYSFASVLSACSGLNDMNKGVQVHSLIAKSPFLS), 186–216 (DVYIGSALVDMYSKCGNVNDAQRVFDEMGDR), 217–251 (NVVSWNSLITCFEQNGPAVEALDVFQMMLESRVEP), 252–282 (DEVTLASVISACASLSAIKVGQEVHGRVVKN), 288–322 (DIILSNAFVDMYAKCSRIKEARFIFDSMPIRNVIA), 324–349 (TSMISGYAMAASTKAARLMFTKMAER), 350–384 (NVVSWNALIAGYTQNGENEEALSLFCLLKRESVCP), 385–419 (THYSFANILKACADLAELHLGMQAHVHVLKHGFKF), 426–456 (DIFVGNSLIDMYVKCGCVEEGYLVFRKMMER), 457–491 (DCVSWNAMIIGFAQNGYGNEALELFREMLESGEKP), 492–527 (DHITMIGVLSACGHAGFVEEGRHYFSSMTRDFGVAP), and 528–558 (LRDHYTCMVDLLGRAGFLEEAKSMIEEMPMQ). The type E motif stretch occupies residues 563–638 (IWGSLLAACK…QPGCSWIKIQ (76 aa)). Residues 639 to 669 (GHDHVFMVKDKSHPRKKQIHSLLDILIAEMR) are type E(+) motif.

This sequence belongs to the PPR family. PCMP-E subfamily.

The polypeptide is Pentatricopeptide repeat-containing protein At2g13600 (PCMP-E76) (Arabidopsis thaliana (Mouse-ear cress)).